Here is a 485-residue protein sequence, read N- to C-terminus: Glutamyl-tRNA(Gln) amidotransferase subunit A (485 aa).

Catalysis depends on charge relay system residues lysine 78 and serine 153. Residue serine 177 is the Acyl-ester intermediate of the active site.

This sequence belongs to the amidase family. GatA subfamily. Heterotrimer of A, B and C subunits.

It carries out the reaction L-glutamyl-tRNA(Gln) + L-glutamine + ATP + H2O = L-glutaminyl-tRNA(Gln) + L-glutamate + ADP + phosphate + H(+). In terms of biological role, allows the formation of correctly charged Gln-tRNA(Gln) through the transamidation of misacylated Glu-tRNA(Gln) in organisms which lack glutaminyl-tRNA synthetase. The reaction takes place in the presence of glutamine and ATP through an activated gamma-phospho-Glu-tRNA(Gln). The chain is Glutamyl-tRNA(Gln) amidotransferase subunit A from Bacillus cereus (strain ATCC 10987 / NRS 248).